A 120-amino-acid polypeptide reads, in one-letter code: UPF0145 protein Bcenmc03_5217 (120 aa).

This sequence belongs to the UPF0145 family.

The polypeptide is UPF0145 protein Bcenmc03_5217 (Burkholderia orbicola (strain MC0-3)).